A 118-amino-acid chain; its full sequence is UPF0102 protein STH1475 (118 aa).

It belongs to the UPF0102 family.

The sequence is that of UPF0102 protein STH1475 from Symbiobacterium thermophilum (strain DSM 24528 / JCM 14929 / IAM 14863 / T).